The primary structure comprises 155 residues: 17.4 kDa class III heat shock protein (155 aa).

In terms of domain architecture, sHSP spans 35–155 (GRGSSNNIPI…KPKTVQIAVS (121 aa)).

This sequence belongs to the small heat shock protein (HSP20) family. As to quaternary structure, may form oligomeric structures.

It is found in the cytoplasm. The polypeptide is 17.4 kDa class III heat shock protein (HSP17.4B) (Arabidopsis thaliana (Mouse-ear cress)).